The primary structure comprises 425 residues: 2-methylserine hydroxymethyltransferase (425 aa).

Residues leucine 126 and glycine 130–leucine 132 contribute to the (6S)-5,6,7,8-tetrahydrofolate site. N6-(pyridoxal phosphate)lysine is present on lysine 235. Position 251 (glutamate 251) interacts with (6S)-5,6,7,8-tetrahydrofolate.

Belongs to the SHMT family. Homodimer. Pyridoxal 5'-phosphate is required as a cofactor.

Its subcellular location is the cytoplasm. It carries out the reaction (6R)-5,10-methylene-5,6,7,8-tetrahydrofolate + D-alanine + H2O = 2-methylserine + (6S)-5,6,7,8-tetrahydrofolate. Its pathway is one-carbon metabolism; tetrahydrofolate interconversion. In terms of biological role, catalyzes the reversible interconversion of alpha-methyl-L-serine to D-alanine with tetrahydrofolate (THF) serving as the one-carbon carrier. Cannot use alpha-methyl-D-serine, L-serine, D-serine or L-alanine. This is 2-methylserine hydroxymethyltransferase from Ensifer sp.